Consider the following 178-residue polypeptide: Interleukin-10 (178 aa).

The first 18 residues, 1 to 18 (MPRSALLCCLILLAGVAA), serve as a signal peptide directing secretion. 2 disulfides stabilise this stretch: cysteine 30–cysteine 126 and cysteine 80–cysteine 132. Asparagine 134 carries an N-linked (GlcNAc...) asparagine glycan.

Belongs to the IL-10 family. In terms of assembly, homodimer. Interacts with IL10RA and IL10RB.

It localises to the secreted. Its function is as follows. Major immune regulatory cytokine that acts on many cells of the immune system where it has profound anti-inflammatory functions, limiting excessive tissue disruption caused by inflammation. Mechanistically, IL10 binds to its heterotetrameric receptor comprising IL10RA and IL10RB leading to JAK1 and STAT2-mediated phosphorylation of STAT3. In turn, STAT3 translocates to the nucleus where it drives expression of anti-inflammatory mediators. Targets antigen-presenting cells (APCs) such as macrophages and monocytes and inhibits their release of pro-inflammatory cytokines including granulocyte-macrophage colony-stimulating factor /GM-CSF, granulocyte colony-stimulating factor/G-CSF, IL-1 alpha, IL-1 beta, IL-6, IL-8 and TNF-alpha. Also interferes with antigen presentation by reducing the expression of MHC-class II and co-stimulatory molecules, thereby inhibiting their ability to induce T cell activation. In addition, controls the inflammatory response of macrophages by reprogramming essential metabolic pathways including mTOR signaling. This chain is Interleukin-10 (IL10), found in Lama glama (Llama).